The chain runs to 349 residues: MSKIRVLSVDDSALMRQIMTEIINSHSDMEMVATAPDPLVARDLIKKFNPDVLTLDVEMPRMDGLDFLEKLMRLRPMPVVMVSSLTGKGSEVTLRALELGAIDFVTKPQLGIREGMLAYSEMIAEKVRTAARARIAAHKPMAAPTTLKAGPLLSSEKLIAIGASTGGTEAIRHVLQPLPLSSPAVIITQHMPPGFTRSFAERLNKLCQISVKEAEDGELVLPGHAYIAPGDKHMELARSGANYQIKIHDGPPVNRHRPSVDVLFHSVAKHAGRNAVGVILTGMGNDGAAGMLAMYQAGAWTIAQNEASCVVFGMPREAINMGGVSEVVDLSQVSQQMLAKISAGQAIRI.

One can recognise a Response regulatory domain in the interval 5–122 (RVLSVDDSAL…REGMLAYSEM (118 aa)). A 4-aspartylphosphate modification is found at D56. The CheB-type methylesterase domain maps to 152–344 (LLSSEKLIAI…QQMLAKISAG (193 aa)). Catalysis depends on residues S164, H190, and D286.

This sequence belongs to the CheB family. In terms of processing, phosphorylated by CheA. Phosphorylation of the N-terminal regulatory domain activates the methylesterase activity.

It localises to the cytoplasm. The enzyme catalyses [protein]-L-glutamate 5-O-methyl ester + H2O = L-glutamyl-[protein] + methanol + H(+). It carries out the reaction L-glutaminyl-[protein] + H2O = L-glutamyl-[protein] + NH4(+). Functionally, involved in chemotaxis. Part of a chemotaxis signal transduction system that modulates chemotaxis in response to various stimuli. Catalyzes the demethylation of specific methylglutamate residues introduced into the chemoreceptors (methyl-accepting chemotaxis proteins or MCP) by CheR. Also mediates the irreversible deamidation of specific glutamine residues to glutamic acid. This is Protein-glutamate methylesterase/protein-glutamine glutaminase from Salmonella typhi.